A 99-amino-acid polypeptide reads, in one-letter code: Beta-defensin 127 (99 aa).

The N-terminal stretch at 1 to 20 is a signal peptide; that stretch reads MGLFMIIAILLFQKPTVTEQ. Disulfide bonds link Cys24–Cys53, Cys33–Cys47, and Cys37–Cys54. The propeptide occupies 66–99; that stretch reads ITKPSHPKPATLALTLQDYVTIIENFPSLKTQST.

The protein belongs to the beta-defensin family.

It localises to the secreted. In terms of biological role, has antibacterial activity. The protein is Beta-defensin 127 (DEFB127) of Pan troglodytes (Chimpanzee).